We begin with the raw amino-acid sequence, 295 residues long: Pantothenate synthetase (295 aa).

ATP is bound at residue 29-36 (MGALHSGH). Residue His-36 is the Proton donor of the active site. Gln-60 provides a ligand contact to (R)-pantoate. Gln-60 contributes to the beta-alanine binding site. 158 to 161 (GQKD) lines the ATP pocket. Position 164 (Gln-164) interacts with (R)-pantoate. Residues Val-187 and 195 to 198 (LSSR) contribute to the ATP site.

It belongs to the pantothenate synthetase family. Homodimer.

It is found in the cytoplasm. The catalysed reaction is (R)-pantoate + beta-alanine + ATP = (R)-pantothenate + AMP + diphosphate + H(+). Its pathway is cofactor biosynthesis; (R)-pantothenate biosynthesis; (R)-pantothenate from (R)-pantoate and beta-alanine: step 1/1. In terms of biological role, catalyzes the condensation of pantoate with beta-alanine in an ATP-dependent reaction via a pantoyl-adenylate intermediate. The sequence is that of Pantothenate synthetase from Paenarthrobacter aurescens (strain TC1).